Reading from the N-terminus, the 372-residue chain is Alpha-1,3-mannosyl-glycoprotein 4-beta-N-acetylglucosaminyltransferase-like protein MGAT4D (372 aa).

Residues Met1–Leu8 are Cytoplasmic-facing. Residues Leu9–Asn29 traverse the membrane as a helical; Signal-anchor for type II membrane protein segment. Over Gln30–Tyr372 the chain is Lumenal. Asn54 and Asn143 each carry an N-linked (GlcNAc...) asparagine glycan.

It belongs to the glycosyltransferase 54 family. May self-associate; specifically in the endoplasmic reticulum prior to its translocation to the Golgi. Interacts with MGAT1, MGAT3 and MAN2A2; may interact with MGTA1 specifically in the Golgi. In terms of processing, N-glycosylated. O-glycosylated; further modified with terminal sialic acid residues. As to expression, testis.

The protein localises to the golgi apparatus membrane. Its subcellular location is the endoplasmic reticulum membrane. Functionally, may play a role in male spermatogenesis. In vitro acts as inhibitor of MGAT1 activity causing cell surface proteins to carry mainly high mannose N-glycans. The function is mediated by its lumenal domain and occurs specifically in the Golgi. A catalytic glucosyltransferase activity is not detected. May be involved in regulation of Sertoli-germ cell interactions during specific stages of spermatogenesis. The chain is Alpha-1,3-mannosyl-glycoprotein 4-beta-N-acetylglucosaminyltransferase-like protein MGAT4D from Rattus norvegicus (Rat).